A 340-amino-acid polypeptide reads, in one-letter code: Ketol-acid reductoisomerase (NADP(+)) (340 aa).

One can recognise a KARI N-terminal Rossmann domain in the interval 1 to 183 (MAITVYYDKD…GGGRTGIIET (183 aa)). NADP(+)-binding positions include 26–29 (FGSQ), R49, S52, S54, and 84–87 (DEIQ). The active site involves H109. G135 provides a ligand contact to NADP(+). One can recognise a KARI C-terminal knotted domain in the interval 184 to 329 (TFKAETETDL…RNLRAMMPWI (146 aa)). Mg(2+) contacts are provided by D192, E196, E228, and E232. S253 contacts substrate.

It belongs to the ketol-acid reductoisomerase family. The cofactor is Mg(2+).

The enzyme catalyses (2R)-2,3-dihydroxy-3-methylbutanoate + NADP(+) = (2S)-2-acetolactate + NADPH + H(+). The catalysed reaction is (2R,3R)-2,3-dihydroxy-3-methylpentanoate + NADP(+) = (S)-2-ethyl-2-hydroxy-3-oxobutanoate + NADPH + H(+). It participates in amino-acid biosynthesis; L-isoleucine biosynthesis; L-isoleucine from 2-oxobutanoate: step 2/4. It functions in the pathway amino-acid biosynthesis; L-valine biosynthesis; L-valine from pyruvate: step 2/4. Functionally, involved in the biosynthesis of branched-chain amino acids (BCAA). Catalyzes an alkyl-migration followed by a ketol-acid reduction of (S)-2-acetolactate (S2AL) to yield (R)-2,3-dihydroxy-isovalerate. In the isomerase reaction, S2AL is rearranged via a Mg-dependent methyl migration to produce 3-hydroxy-3-methyl-2-ketobutyrate (HMKB). In the reductase reaction, this 2-ketoacid undergoes a metal-dependent reduction by NADPH to yield (R)-2,3-dihydroxy-isovalerate. This is Ketol-acid reductoisomerase (NADP(+)) from Campylobacter jejuni subsp. doylei (strain ATCC BAA-1458 / RM4099 / 269.97).